We begin with the raw amino-acid sequence, 257 residues long: Enterotoxin type A (257 aa).

The signal sequence occupies residues 1–27; sequence MKKTAFILLLFIALTWTTSPLVNGSEK. A disulfide bond links Cys120 and Cys130. Residues His211, His249, and Asp251 each contribute to the Zn(2+) site.

It belongs to the staphylococcal/streptococcal toxin family. As to quaternary structure, monomer. Interacts with MHC class II molecules alpha/HLA-DRB1 and beta/HLA-DRA chains. The interaction with MHC-II molecules occurs at both zinc-dependent and zinc-independent sites. Interacts with T-cell receptor beta variable 7-9/TRBV7-9. The cofactor is Zn(2+).

It localises to the secreted. Its function is as follows. Staphylococcal enterotoxin that activates the host immune system by binding as unprocessed molecules to major histocompatibility (MHC) complex class II and T-cell receptor (TCR) molecules. In turn, waves of cellular activation, cytokine production, and migration into the lung tissue and airways occur via alphabeta T-cells. Also causes the intoxication staphylococcal food poisoning syndrome. The illness is characterized by high fever, hypotension, diarrhea, shock, and in some cases death. This Staphylococcus aureus (strain Newman) protein is Enterotoxin type A (sea).